The chain runs to 387 residues: Flap endonuclease 1 (387 aa).

An N-domain region spans residues 1-104 (MGIKGLSQLI…GELEKRKERQ (104 aa)). Residue Asp-34 coordinates Mg(2+). Position 70 (Arg-70) interacts with DNA. Positions 86, 158, 160, 179, and 181 each coordinate Mg(2+). The tract at residues 122 to 253 (KMVMWNKRTT…KKALAMIKKY (132 aa)) is I-domain. Glu-158 is a DNA binding site. Residues Gly-231 and Asp-233 each coordinate DNA. Asp-233 is a binding site for Mg(2+). Residues 332-387 (SSRGKPTQTRLDGFFTPVASSSTTKKKAPAKKDDKKSATDKKRKAADASTSSKKKK) form a disordered region. The segment at 338-346 (TQTRLDGFF) is interaction with PCNA. Residues 361 to 371 (AKKDDKKSATD) show a composition bias toward basic and acidic residues. Low complexity predominate over residues 378 to 387 (DASTSSKKKK).

Belongs to the XPG/RAD2 endonuclease family. FEN1 subfamily. In terms of assembly, interacts with PCNA. Three molecules of FEN1 bind to one PCNA trimer with each molecule binding to one PCNA monomer. PCNA stimulates the nuclease activity without altering cleavage specificity. The cofactor is Mg(2+). Post-translationally, phosphorylated. Phosphorylation upon DNA damage induces relocalization to the nuclear plasma.

It is found in the nucleus. It localises to the nucleolus. Its subcellular location is the nucleoplasm. The protein localises to the mitochondrion. Functionally, structure-specific nuclease with 5'-flap endonuclease and 5'-3' exonuclease activities involved in DNA replication and repair. During DNA replication, cleaves the 5'-overhanging flap structure that is generated by displacement synthesis when DNA polymerase encounters the 5'-end of a downstream Okazaki fragment. It enters the flap from the 5'-end and then tracks to cleave the flap base, leaving a nick for ligation. Also involved in the long patch base excision repair (LP-BER) pathway, by cleaving within the apurinic/apyrimidinic (AP) site-terminated flap. Acts as a genome stabilization factor that prevents flaps from equilibrating into structures that lead to duplications and deletions. Also possesses 5'-3' exonuclease activity on nicked or gapped double-stranded DNA, and exhibits RNase H activity. Also involved in replication and repair of rDNA and in repairing mitochondrial DNA. The polypeptide is Flap endonuclease 1 (Naegleria gruberi (Amoeba)).